We begin with the raw amino-acid sequence, 506 residues long: 2-isopropylmalate synthase (506 aa).

In terms of domain architecture, Pyruvate carboxyltransferase spans 4–266 (ILFMDTTLRD…EPSMTLKEIK (263 aa)). Residues Asp13, His201, His203, and Asn237 each coordinate Mn(2+). Residues 390–506 (NITQLQVHFV…KLKSFIQLVK (117 aa)) form a regulatory domain region.

The protein belongs to the alpha-IPM synthase/homocitrate synthase family. LeuA type 1 subfamily. In terms of assembly, homodimer. Mn(2+) serves as cofactor.

It localises to the cytoplasm. The catalysed reaction is 3-methyl-2-oxobutanoate + acetyl-CoA + H2O = (2S)-2-isopropylmalate + CoA + H(+). The protein operates within amino-acid biosynthesis; L-leucine biosynthesis; L-leucine from 3-methyl-2-oxobutanoate: step 1/4. Its function is as follows. Catalyzes the condensation of the acetyl group of acetyl-CoA with 3-methyl-2-oxobutanoate (2-ketoisovalerate) to form 3-carboxy-3-hydroxy-4-methylpentanoate (2-isopropylmalate). This chain is 2-isopropylmalate synthase, found in Bacillus cereus (strain 03BB102).